The sequence spans 202 residues: Peptidyl-tRNA hydrolase (202 aa).

Tyrosine 16 provides a ligand contact to tRNA. Histidine 21 serves as the catalytic Proton acceptor. TRNA is bound by residues tyrosine 68, asparagine 70, and asparagine 116.

The protein belongs to the PTH family. In terms of assembly, monomer.

Its subcellular location is the cytoplasm. It catalyses the reaction an N-acyl-L-alpha-aminoacyl-tRNA + H2O = an N-acyl-L-amino acid + a tRNA + H(+). Functionally, hydrolyzes ribosome-free peptidyl-tRNAs (with 1 or more amino acids incorporated), which drop off the ribosome during protein synthesis, or as a result of ribosome stalling. Its function is as follows. Catalyzes the release of premature peptidyl moieties from peptidyl-tRNA molecules trapped in stalled 50S ribosomal subunits, and thus maintains levels of free tRNAs and 50S ribosomes. In Treponema pallidum (strain Nichols), this protein is Peptidyl-tRNA hydrolase.